A 288-amino-acid chain; its full sequence is 30 kDa spicule matrix protein (288 aa).

The N-terminal stretch at methionine 1–alanine 20 is a signal peptide. In terms of domain architecture, C-type lectin spans alanine 93–proline 163. N-linked (GlcNAc...) asparagine glycosylation is present at asparagine 103.

As to expression, spines and tube feet.

In terms of biological role, matrix protein of the sea urchin embryo spicule. The function of the matrix proteins is to direct crystal growth in certain orientations and inhibit growth in others. The chain is 30 kDa spicule matrix protein (SM30) from Hemicentrotus pulcherrimus (Sea urchin).